We begin with the raw amino-acid sequence, 561 residues long: Cation diffusion facilitator family protein 1 (561 aa).

Residues 1–20 (MEVTMEDRSVKADKADRDDN) show a composition bias toward basic and acidic residues. The disordered stretch occupies residues 1–26 (MEVTMEDRSVKADKADRDDNNTTSTE). The Cytoplasmic segment spans residues 1 to 112 (MEVTMEDRSV…SESVKGVSRS (112 aa)). Residues 113–133 (LIIQIGMTVIFCALEFITGVV) form a helical membrane-spanning segment. Over 134–136 (CSS) the chain is Extracellular. The helical transmembrane segment at 137–157 (IAMLADSYHMAADVMALIVAF) threads the bilayer. The Cytoplasmic segment spans residues 158-176 (TCIKIATRPSTRLGYGWVR). The chain crosses the membrane as a helical span at residues 177–197 (AETLGGFFNGIFMCTVCVLVF). The Extracellular segment spans residues 198 to 215 (QEAVGRIINVHMITHPLQ). The chain crosses the membrane as a helical span at residues 216 to 236 (VLVIGFIGLLINLFGMFNLSG). Over 237-391 (HGHSHGGGSH…NVNIHGVWLH (155 aa)) the chain is Cytoplasmic. The disordered stretch occupies residues 240 to 304 (SHGGGSHGHS…HTRLNGKFRS (65 aa)). The interval 246–270 (HGHSHGGSHGHSHNNKKTKKNDGHG) is 6 X 2 AA approximate repeats of H-G. The segment covering 247–264 (GHSHGGSHGHSHNNKKTK) has biased composition (basic residues). Residues 392–412 (LLSDAFGSVIVMISAGFVYFL) form a helical membrane-spanning segment. Residues 413 to 420 (PTWKIAAY) lie on the Extracellular side of the membrane. Residues 421–441 (LDPILSISLASIMGFTAVVLV) traverse the membrane as a helical segment. Residues 442-561 (KTSGEKLLKQ…SVSTENEITE (120 aa)) lie on the Cytoplasmic side of the membrane.

Belongs to the cation diffusion facilitator (CDF) transporter (TC 2.A.4) family. SLC30A subfamily. As to quaternary structure, interacts with lin-45 in a zinc-dependent manner. As to expression, expressed in intestinal cells. Expressed in the vulva.

The protein localises to the basolateral cell membrane. Its function is as follows. Involved in the regulation of Pn.p cell fate determination. Involved in zinc metabolism and the decrease of the cytosolic zinc concentration which is thought to modulate Ras signaling. Involved in zinc transport from the intestinal lumen to the pseudocoelum. This chain is Cation diffusion facilitator family protein 1 (cdf-1), found in Caenorhabditis elegans.